The sequence spans 347 residues: Large ribosomal subunit protein uL10 (347 aa).

Residues 312–347 are disordered; the sequence is AAAPAEEEVKKEEEPEEEEEDHAEEDGMAGLGALFG. The span at 325-338 shows a compositional bias: acidic residues; sequence EPEEEEEDHAEEDG.

Belongs to the universal ribosomal protein uL10 family. In terms of assembly, part of the 50S ribosomal subunit. Forms part of the ribosomal stalk which helps the ribosome interact with GTP-bound translation factors. Forms a heptameric L10(L12)2(L12)2(L12)2 complex, where L10 forms an elongated spine to which the L12 dimers bind in a sequential fashion.

Its function is as follows. Forms part of the ribosomal stalk, playing a central role in the interaction of the ribosome with GTP-bound translation factors. The sequence is that of Large ribosomal subunit protein uL10 from Methanosarcina acetivorans (strain ATCC 35395 / DSM 2834 / JCM 12185 / C2A).